A 228-amino-acid polypeptide reads, in one-letter code: Cytidylate kinase (228 aa).

An ATP-binding site is contributed by 12–20 (GPASAGKST).

Belongs to the cytidylate kinase family. Type 1 subfamily.

It is found in the cytoplasm. It catalyses the reaction CMP + ATP = CDP + ADP. The enzyme catalyses dCMP + ATP = dCDP + ADP. The polypeptide is Cytidylate kinase (Lactiplantibacillus plantarum (strain ATCC BAA-793 / NCIMB 8826 / WCFS1) (Lactobacillus plantarum)).